A 207-amino-acid polypeptide reads, in one-letter code: Ribosomal RNA small subunit methyltransferase G (207 aa).

S-adenosyl-L-methionine is bound by residues Gly74, Leu79, 125–126, and Arg140; that span reads VE.

It belongs to the methyltransferase superfamily. RNA methyltransferase RsmG family.

Its subcellular location is the cytoplasm. The enzyme catalyses guanosine(527) in 16S rRNA + S-adenosyl-L-methionine = N(7)-methylguanosine(527) in 16S rRNA + S-adenosyl-L-homocysteine. Specifically methylates the N7 position of guanine in position 527 of 16S rRNA. This chain is Ribosomal RNA small subunit methyltransferase G, found in Shewanella halifaxensis (strain HAW-EB4).